Reading from the N-terminus, the 480-residue chain is MFDVAIIGAGVIGCSIARELSKYNLNVALIEKENDVGNVTTKANSAIIHAGYDAKPGTLKGKLNAKGNLMFDELCRELEVPFKRVGSLVLAFDDDEMKTLGKLYEQGIQNGVPELYILSKEKVLEMDPNISDNIKGALYAKTGGIIGPWEFTIALAENAVENGVNIFLSNEVVDIEKKDFGYRIITNKDTYDTKYVVNCAGLYADKINNMVSNNKMEIIPRRGQYYLLDKTVGNLVKYVIFQCPSKLGKGVLVTPTVHGNLLIGPDAEDLIDKTALNTTSEGLNFIVEVARRSVKTLPLNMAITNFAGLRARTERDDFIIEEAVDAKGFINVAGIESPGLSSAPAISLYVIDILKNIAKKIEKKENFNPYRRAIPKFIELSEDEKNELVKKDKRFGKIICRCESITEGEIVSAIHRNVGARTVDAVKRRVRAGMGRCQGGFCSPRVIEILARELGVEMTEIEKDHEGSYILTGPTKSEVQ.

Residues Ile12, Glu31, 40–41 (TT), and 45–47 (SAI) each bind FAD. Ser45 and His49 together coordinate sn-glycerol 3-phosphate. The active-site Proton acceptor is the His49. Residue Val172 coordinates FAD. Positions 249 and 310 each coordinate sn-glycerol 3-phosphate. Residue 335–336 (IE) coordinates FAD. Ser337 lines the sn-glycerol 3-phosphate pocket. Ser341 serves as a coordination point for FAD. Residues Cys400, Cys402, Cys437, and Cys442 each coordinate [2Fe-2S] cluster.

It depends on [2Fe-2S] cluster as a cofactor.

It catalyses the reaction sn-glycerol 3-phosphate + A = dihydroxyacetone phosphate + AH2. Its pathway is polyol metabolism; glycerol degradation via glycerol kinase pathway; glycerone phosphate from sn-glycerol 3-phosphate (aerobic route): step 1/1. Its function is as follows. Catalyzes the dehydrogenation of glycerol 3-phosphate to dihydroxyacetone phosphate. Is probably involved in anaerobic glycerol metabolism. Active in vitro with the artificial electron acceptor 2,6-dichlorophenolindophenol (DCPIP), but not with NAD or NADP. Also displays a very low oxidase activity in vitro on glycerol 3-phosphate with O2 as the electron acceptor, but this activity is most likely not physiological. The protein is Glycerol 3-phosphate dehydrogenase of Caloramator mitchellensis.